Reading from the N-terminus, the 80-residue chain is Small membrane A-kinase anchor protein (80 aa).

G2 is lipidated: N-myristoyl glycine.

The protein belongs to the small membrane AKAP family. May be palmitoylated at Cys-3.

It localises to the cell membrane. Its function is as follows. Binds to type I regulatory subunits of protein kinase A and may anchor/target them to the plasma membrane. This is Small membrane A-kinase anchor protein from Tetraodon nigroviridis (Spotted green pufferfish).